The following is a 316-amino-acid chain: MSKQFGKVGVLYGGRSAEREVSLMSGKGVHEALLSAGVDAHLFDTGERSLADLAAAGFERVFIALHGRYGEDGTLQGALELLGIPYTGSGPLASSLSMDKIMTKRVWLQHGLPTPAFEVLGGSTELRLVPDRLGLPLILKPPHEGSTVGITKVAGYSDMKAAYELAARFDAEVLAEQFITGRELTVAVLGSGAAARALPVIEIVAPGGNYDYEHKYFSDDTQYFCPADLPADVAADVAAVAERAYAALGCEGWGRVDFILDRENRPWLLEMNTSPGMTGHSLVPMAARAVGMSYADLCVAILAKAACKVRSPARQD.

The ATP-grasp domain maps to 104–303; it reads KRVWLQHGLP…YADLCVAILA (200 aa). 130–185 is a binding site for ATP; that stretch reads PDRLGLPLILKPPHEGSTVGITKVAGYSDMKAAYELAARFDAEVLAEQFITGRELT. D257, E270, and N272 together coordinate Mg(2+).

It belongs to the D-alanine--D-alanine ligase family. Mg(2+) serves as cofactor. It depends on Mn(2+) as a cofactor.

It localises to the cytoplasm. It catalyses the reaction 2 D-alanine + ATP = D-alanyl-D-alanine + ADP + phosphate + H(+). It functions in the pathway cell wall biogenesis; peptidoglycan biosynthesis. Functionally, cell wall formation. The protein is D-alanine--D-alanine ligase of Bordetella parapertussis (strain 12822 / ATCC BAA-587 / NCTC 13253).